Consider the following 368-residue polypeptide: Alanine racemase (368 aa).

Lys40 functions as the Proton acceptor; specific for D-alanine in the catalytic mechanism. Position 40 is an N6-(pyridoxal phosphate)lysine (Lys40). Arg134 contributes to the substrate binding site. Tyr263 (proton acceptor; specific for L-alanine) is an active-site residue. Met310 serves as a coordination point for substrate.

The protein belongs to the alanine racemase family. Pyridoxal 5'-phosphate serves as cofactor.

It carries out the reaction L-alanine = D-alanine. It functions in the pathway amino-acid biosynthesis; D-alanine biosynthesis; D-alanine from L-alanine: step 1/1. Its function is as follows. Catalyzes the interconversion of L-alanine and D-alanine. May also act on other amino acids. The sequence is that of Alanine racemase (alr) from Listeria monocytogenes serotype 4a (strain HCC23).